The following is a 172-amino-acid chain: Translation initiation factor IF-3 (172 aa).

Belongs to the IF-3 family. Monomer.

The protein localises to the cytoplasm. Its function is as follows. IF-3 binds to the 30S ribosomal subunit and shifts the equilibrium between 70S ribosomes and their 50S and 30S subunits in favor of the free subunits, thus enhancing the availability of 30S subunits on which protein synthesis initiation begins. This Geobacter sulfurreducens (strain ATCC 51573 / DSM 12127 / PCA) protein is Translation initiation factor IF-3.